Consider the following 185-residue polypeptide: Elongation factor P (185 aa).

This sequence belongs to the elongation factor P family.

The protein resides in the cytoplasm. Its pathway is protein biosynthesis; polypeptide chain elongation. Functionally, involved in peptide bond synthesis. Stimulates efficient translation and peptide-bond synthesis on native or reconstituted 70S ribosomes in vitro. Probably functions indirectly by altering the affinity of the ribosome for aminoacyl-tRNA, thus increasing their reactivity as acceptors for peptidyl transferase. In Deinococcus geothermalis (strain DSM 11300 / CIP 105573 / AG-3a), this protein is Elongation factor P.